The following is a 418-amino-acid chain: MARAAFLFKTVGFGGLQNVPINDELASHLLRAGNSPWQLTQFLDWISLGRGLATSALVPTAGSRYYQMSCLLSGTLQIPFRPNHRWGDVRFLRLVWSAPTLDGLVIAPPPILAQPAIQAQADRAYDCDDYPFLARDPRFKHRVYQQLSAITLLNLTGFGPISYVRVDEDMWSGDVSQLLMNYFGHTFAEIAYTLCQASANRPWEHDGTYARMTQIVLSLFWLSYVGVIHQHNTYRTFYFQCNRRGDAAEVWILSCSLTHSAQIRAGNRSLFVMPTSPDWNMDVNLILSSTLTGCLCSGSQLPLIDNNSVPNVSRNIHGWTGRGGNQLHGFQVRRMITEYCDRLRRDGVMTPAQQMQIEALGDQTQQFKRDKLEAWALEDDQYNRAHPNSTMFRTKPFTNAQWGRGNTAATSAAIAALI.

Belongs to the orthoreovirus sigma-1 protein family. In terms of assembly, interacts with protein mu-NS; in viral inclusions.

The protein resides in the virion. Inner capsid (core) component. This Mammalia (T2J) protein is Inner capsid protein sigma-2 (S2).